The sequence spans 83 residues: Transmembrane protein EP84R (83 aa).

2 consecutive transmembrane segments (helical) span residues 31-51 (IIGV…IIIL) and 59-79 (TGSI…FLIY).

The protein belongs to the asfivirus EP84R family.

Its subcellular location is the virion membrane. This Ornithodoros (relapsing fever ticks) protein is Transmembrane protein EP84R.